Reading from the N-terminus, the 597-residue chain is Dynein intermediate chain 3, ciliary (597 aa).

WD repeat units follow at residues 159 to 210 (EIKR…KPEF), 213 to 253 (KPVS…QAVE), 260 to 301 (SHHD…EPTE), 314 to 354 (ENAQ…PPEK), 361 to 400 (EHIGPVYSLQRNPFFPKNFLTVGDWTARIWSEDIRDSSIM), 404 to 444 (YHMS…KDPT), and 449 to 488 (VSDDALHSLRVQDQGRLIATGSNSGTTTLLELSSGLCTMQ). Disordered stretches follow at residues 512-546 (RQRELRLKRQGASAQGQDDDEEGGPDEEEDLVAAA) and 562-597 (AAQQAKLSEQDNKIIEEAEENNGSEKKDTENGEKEG). The segment covering 528–542 (QDDDEEGGPDEEEDL) has biased composition (acidic residues). Residues 584 to 597 (GSEKKDTENGEKEG) show a composition bias toward basic and acidic residues.

It belongs to the dynein intermediate chain family. As to quaternary structure, consists of at least two heavy chains (alpha and beta), three intermediate chains and several light chains.

The protein localises to the cytoplasm. The protein resides in the cytoskeleton. Its subcellular location is the cilium axoneme. Functionally, may play a role in the regulation of dynein heavy chain activity. The protein is Dynein intermediate chain 3, ciliary of Heliocidaris crassispina (Sea urchin).